Here is a 278-residue protein sequence, read N- to C-terminus: Inosose isomerase (278 aa).

Positions 142, 174, 200, and 246 each coordinate a divalent metal cation.

It belongs to the IolI family. A divalent metal cation serves as cofactor.

The enzyme catalyses scyllo-inosose = scyllo-inosine. The protein operates within polyol metabolism; myo-inositol degradation into acetyl-CoA. Involved in the reversible interconverion of 2-keto-myo-inositol (2KMI, inosose or 2,4,6/3,5-pentahydroxycyclohexanone) to 1-keto-D-chiro-inositol (1KDCI or 2,3,5/4,6-pentahydroxycyclohexanone). The polypeptide is Inosose isomerase (iolI) (Bacillus licheniformis (strain ATCC 14580 / DSM 13 / JCM 2505 / CCUG 7422 / NBRC 12200 / NCIMB 9375 / NCTC 10341 / NRRL NRS-1264 / Gibson 46)).